Here is a 689-residue protein sequence, read N- to C-terminus: MDAHELSFRDGHGSSTSTMKDECASEEKALYLPGDSSFASVFGPSETVEDVETGPESTQDKPHSFNTQKPIREKLAGKNVAPFLARHIPEQYAPLGSQTGQPVEISSANSKYCYRHRPDLKCRRQADEPTMDKLQRSDQQGIAHAWSIFSAAPAKHRKLILQGIMAQCCFPQLSFISATVRDLIRIDFLTALPPEISFKILCYLDTTSLCKAAQVSRRWRALADDDVVWHRMCEQHIHRKCKKCGWGLPLLDRKRLRESKREIERRAATWDVSEQPAETESNSATIDTAASGSKRKPESDKEDTAMVKRQCTSIVSQSEQNEDYFKTRYRPWKEVYKDRFKVGTNWKYGRCSIRVFKGHSNGIMCLQFEDNILATGSYDATIKIWDTETGEELRTLKGHRSGIRCLQFDDTKLISGSMDHTLKVWNWRTGECISTYSGHRGGVVGLHFDATILASGSVDKTVKIWNFEDKSTCLLRGHTDWVNAVRVDSASRTVFSASDDCTVKLWDLDTKSCIRTFHGHVGQVQQVVPLPREFEFEDHDVECENDNVSVTSGDSPAASPQAIPGFDAQTSDTPSSAFGPAFDDGRPSPPRYIVTSALDSTIRLWETSSGRCLRTFFGHLEGVWALAADTLRIVSGAEDRMVKIWDPRTGKCERTFTGHSGPVTCIGLGDSRFATGSEDCEVRMYSFQT.

2 stretches are compositionally biased toward basic and acidic residues: residues 1 to 12 (MDAHELSFRDGH) and 19 to 29 (MKDECASEEKA). Residues 1-66 (MDAHELSFRD…STQDKPHSFN (66 aa)) form a disordered region. The region spanning 186–232 (IDFLTALPPEISFKILCYLDTTSLCKAAQVSRRWRALADDDVVWHRM) is the F-box domain. The disordered stretch occupies residues 267-306 (AATWDVSEQPAETESNSATIDTAASGSKRKPESDKEDTAM). Positions 276–291 (PAETESNSATIDTAAS) are enriched in polar residues. A compositionally biased stretch (basic and acidic residues) spans 295–306 (RKPESDKEDTAM). 7 WD repeats span residues 358–395 (GHSN…ELRT), 398–437 (GHRS…STYS), 439–475 (HRGG…TCLL), 477–518 (GHTD…RTFH), 572–615 (DTPS…CLRT), 616–655 (FFGH…CERT), and 658–689 (GHSG…SFQT).

Belongs to the WD repeat MET30/SCONB/SCON-2 family. In terms of assembly, component of the SCF(sconB) E3 ubiquitin ligase complex.

Its pathway is protein modification; protein ubiquitination. Functionally, component of the SCF(sconB) E3 ubiquitin ligase complex involved in the regulation of sulfur metabolite repression, probably by mediating the inactivation or degradation of the metR transcription factor. The polypeptide is Probable E3 ubiquitin ligase complex SCF subunit sconB (sconB) (Neosartorya fischeri (strain ATCC 1020 / DSM 3700 / CBS 544.65 / FGSC A1164 / JCM 1740 / NRRL 181 / WB 181) (Aspergillus fischerianus)).